Consider the following 226-residue polypeptide: MNLIDQIKNTLIISCQAVDDEPLNDSYVLSKMCYALVLGGAKVLRLSQVEHIKKIKEVVNVPIIGLIKKHYDNSEVFITPTIKEVDQLVDLKVDIIALDATLRKRPDQDLTNLIKTIKTKYPNQLLMADCSNINDAINAQNLGFDLISTTLRGYTKDTLNHNNIENDYQFLKDLKKVITKPIIAEGGIWTPQQAKEILNLGIHSIVVGSAITRLHLIVKYWNDNLK.

Belongs to the NanE family.

It catalyses the reaction an N-acyl-D-glucosamine 6-phosphate = an N-acyl-D-mannosamine 6-phosphate. It participates in amino-sugar metabolism; N-acetylneuraminate degradation; D-fructose 6-phosphate from N-acetylneuraminate: step 3/5. In terms of biological role, converts N-acetylmannosamine-6-phosphate (ManNAc-6-P) to N-acetylglucosamine-6-phosphate (GlcNAc-6-P). The sequence is that of Putative N-acetylmannosamine-6-phosphate 2-epimerase from Mycoplasma mycoides subsp. mycoides SC (strain CCUG 32753 / NCTC 10114 / PG1).